The chain runs to 156 residues: Cyanate hydratase (156 aa).

Active-site residues include arginine 96, glutamate 99, and serine 122.

This sequence belongs to the cyanase family.

The enzyme catalyses cyanate + hydrogencarbonate + 3 H(+) = NH4(+) + 2 CO2. Catalyzes the reaction of cyanate with bicarbonate to produce ammonia and carbon dioxide. The polypeptide is Cyanate hydratase (Photorhabdus laumondii subsp. laumondii (strain DSM 15139 / CIP 105565 / TT01) (Photorhabdus luminescens subsp. laumondii)).